The primary structure comprises 266 residues: bZIP transcription factor 12 (266 aa).

Residues 184 to 248 (AMQRQKRMIK…KELKEMVVPV (65 aa)) form the bZIP domain. Residues 187–205 (RQKRMIKNRESAARSRERK) form a basic motif region. A coiled-coil region spans residues 202 to 244 (RERKQAYIAELESLVTQLEEENAKMFKEQEEQHQKRLKELKEM). The tract at residues 212 to 219 (LESLVTQL) is leucine-zipper.

The protein localises to the nucleus. Its function is as follows. Transcription activator that binds to the ABA-responsive elements (ABREs) in vitro. Involved in abiotic stress responses and abscisic acid (ABA) signaling. Involved in the signaling pathway that induces growth inhibition in response to D-allose. The chain is bZIP transcription factor 12 from Oryza sativa subsp. japonica (Rice).